A 25-amino-acid polypeptide reads, in one-letter code: Kunitz-type serine protease inhibitor 2 (25 aa).

Residues 6–25 (VCELPKEVGGPCRGHIIPRY) form the BPTI/Kunitz inhibitor domain.

The protein resides in the secreted. Inhibits bovine trypsin, human plasma kallikrein and human neutrophil elastase. The sequence is that of Kunitz-type serine protease inhibitor 2 from Rhipicephalus microplus (Cattle tick).